The primary structure comprises 148 residues: MVTVYDVPADKLIQKTAEKLKEMNIGVPEWVDFVKTGVSRERRPDQDDWWYIRCASILRKIYIYGPVGVSRLRTAYGGRKNRGHEPEHFYKGSGNIIRKALQELEKLGLVEKTPEGRVVTPKGRSFLDNIAKEVRDEIINEIPALAKY.

This sequence belongs to the eukaryotic ribosomal protein eS19 family. In terms of assembly, part of the 30S ribosomal subunit.

May be involved in maturation of the 30S ribosomal subunit. This chain is Small ribosomal subunit protein eS19, found in Methanocaldococcus jannaschii (strain ATCC 43067 / DSM 2661 / JAL-1 / JCM 10045 / NBRC 100440) (Methanococcus jannaschii).